The primary structure comprises 420 residues: Phosphoglycerate kinase (420 aa).

Residues Val-26, Asp-27, Tyr-28, Asn-29, Gln-42, Arg-43, Ser-66, His-67, Gly-69, Arg-70, Leu-125, Arg-126, His-173, and Arg-174 each contribute to the (2R)-3-phosphoglycerate site. At Tyr-199 the chain carries Phosphotyrosine. Ser-206 is subject to Phosphoserine. The segment at 209–228 is calmodulin binding; that stretch reads KPFLAILGGAKVSDKIKLIE. Position 217 (Gly-217) interacts with ADP. Gly-217 is a binding site for CDP. 2 residues coordinate AMP: Ala-218 and Lys-219. Ala-218 is a binding site for ATP. Ala-218 contributes to the Mg(2+) binding site. Asp-222 is a CDP binding site. Asp-222 provides a ligand contact to Mg(2+). Lys-223 lines the AMP pocket. Lys-223 contributes to the ATP binding site. Gly-241 is a binding site for ADP. Position 241 (Gly-241) interacts with CDP. Residues Gly-242 and Gly-316 each coordinate AMP. ATP is bound by residues Gly-242 and Gly-316. CDP-binding residues include Gly-341 and Phe-346. Phe-346 provides a ligand contact to ADP. An AMP-binding site is contributed by Glu-347. Residues Glu-347, Asp-378, and Thr-379 each contribute to the ATP site. Mg(2+) is bound at residue Asp-378. Ser-393 carries the phosphoserine modification.

It belongs to the phosphoglycerate kinase family. In terms of assembly, monomer. Interacts with calmodulin in the presence of Ca(2+). Mg(2+) serves as cofactor.

The protein resides in the cytoplasm. It carries out the reaction (2R)-3-phosphoglycerate + ATP = (2R)-3-phospho-glyceroyl phosphate + ADP. Its pathway is carbohydrate degradation; glycolysis; pyruvate from D-glyceraldehyde 3-phosphate: step 2/5. This is Phosphoglycerate kinase from Dictyostelium discoideum (Social amoeba).